Consider the following 482-residue polypeptide: Beta-1,3-glucan-binding protein 2 (482 aa).

Positions 1–18 (MWIKSVCLFATIAGCLGQ) are cleaved as a signal peptide. Residues 23 to 122 (YKVPDAKLEA…GEWTVTEFVN (100 aa)) form the CBM39 domain. A glycan (N-linked (GlcNAc...) asparagine) is linked at Asn124. A disordered region spans residues 127 to 153 (VVDTSTAPPPVAPAVSEEDQSPGPQWR). A GH16 domain is found at 128–482 (VDTSTAPPPV…KVDYVRVYAL (355 aa)). Asn189 is a glycosylation site (N-linked (GlcNAc...) asparagine).

Monomer. Post-translationally, N-glycosylated. Cuticle and fat body.

It localises to the secreted. Involved in the recognition of invading microorganisms. Binds specifically to beta-1,3-glucan and lipoteichoic acid and causes aggregation of invading microorganisms. Binding to beta-1,3-glucan activates the phenoloxidase cascade. The sequence is that of Beta-1,3-glucan-binding protein 2 from Manduca sexta (Tobacco hawkmoth).